A 350-amino-acid chain; its full sequence is Peroxidase 24 (350 aa).

The first 27 residues, 1–27 (MANKSLEIRFLFPLVLFLVVKLLCVDG), serve as a signal peptide directing secretion. Cystine bridges form between cysteine 55–cysteine 135, cysteine 88–cysteine 93, cysteine 141–cysteine 346, and cysteine 221–cysteine 253. N-linked (GlcNAc...) asparagine glycosylation occurs at asparagine 73. Histidine 86 serves as the catalytic Proton acceptor. Ca(2+) contacts are provided by aspartate 87, valine 90, glycine 92, aspartate 94, and serine 96. Proline 184 provides a ligand contact to substrate. An N-linked (GlcNAc...) asparagine glycan is attached at asparagine 189. Histidine 214 serves as a coordination point for heme b. Residue threonine 215 coordinates Ca(2+). Asparagine 230 carries N-linked (GlcNAc...) asparagine glycosylation. The Ca(2+) site is built by aspartate 269 and aspartate 277.

It belongs to the peroxidase family. Classical plant (class III) peroxidase subfamily. The cofactor is heme b. Ca(2+) is required as a cofactor.

It is found in the secreted. The catalysed reaction is 2 a phenolic donor + H2O2 = 2 a phenolic radical donor + 2 H2O. Functionally, removal of H(2)O(2), oxidation of toxic reductants, biosynthesis and degradation of lignin, suberization, auxin catabolism, response to environmental stresses such as wounding, pathogen attack and oxidative stress. These functions might be dependent on each isozyme/isoform in each plant tissue. The protein is Peroxidase 24 (PER24) of Arabidopsis thaliana (Mouse-ear cress).